The primary structure comprises 372 residues: tRNA-specific 2-thiouridylase MnmA (372 aa).

Residues 17 to 24 (GMSGGVDS) and Met-43 contribute to the ATP site. The interaction with target base in tRNA stretch occupies residues 103 to 105 (NPD). Catalysis depends on Cys-108, which acts as the Nucleophile. Cys-108 and Cys-205 form a disulfide bridge. Residue Gly-133 coordinates ATP. The segment at 155-157 (KDQ) is interaction with tRNA. Catalysis depends on Cys-205, which acts as the Cysteine persulfide intermediate. Positions 317–318 (RY) are interaction with tRNA.

This sequence belongs to the MnmA/TRMU family.

It is found in the cytoplasm. It catalyses the reaction S-sulfanyl-L-cysteinyl-[protein] + uridine(34) in tRNA + AH2 + ATP = 2-thiouridine(34) in tRNA + L-cysteinyl-[protein] + A + AMP + diphosphate + H(+). Functionally, catalyzes the 2-thiolation of uridine at the wobble position (U34) of tRNA, leading to the formation of s(2)U34. The polypeptide is tRNA-specific 2-thiouridylase MnmA (Shewanella sediminis (strain HAW-EB3)).